The following is a 208-amino-acid chain: Uracil phosphoribosyltransferase (208 aa).

Residues Arg-78, Arg-103, and 130 to 138 (DPMLATGGS) contribute to the 5-phospho-alpha-D-ribose 1-diphosphate site. Residues Ile-193 and 198 to 200 (GDA) each bind uracil. 5-phospho-alpha-D-ribose 1-diphosphate is bound at residue Asp-199.

This sequence belongs to the UPRTase family. It depends on Mg(2+) as a cofactor.

It catalyses the reaction UMP + diphosphate = 5-phospho-alpha-D-ribose 1-diphosphate + uracil. It participates in pyrimidine metabolism; UMP biosynthesis via salvage pathway; UMP from uracil: step 1/1. Allosterically activated by GTP. In terms of biological role, catalyzes the conversion of uracil and 5-phospho-alpha-D-ribose 1-diphosphate (PRPP) to UMP and diphosphate. In Shewanella halifaxensis (strain HAW-EB4), this protein is Uracil phosphoribosyltransferase.